The chain runs to 154 residues: Fluoride-specific ion channel FluC 1 (154 aa).

4 helical membrane passes run 28 to 48, 59 to 79, 91 to 111, and 124 to 144; these read VVAV…AASL, WTTF…MVVI, PFFG…AVDS, and LAYL…AAWA. G99 and T102 together coordinate Na(+).

It belongs to the fluoride channel Fluc/FEX (TC 1.A.43) family.

The protein resides in the cell membrane. The catalysed reaction is fluoride(in) = fluoride(out). Na(+) is not transported, but it plays an essential structural role and its presence is essential for fluoride channel function. In terms of biological role, fluoride-specific ion channel. Important for reducing fluoride concentration in the cell, thus reducing its toxicity. The chain is Fluoride-specific ion channel FluC 1 from Streptomyces coelicolor (strain ATCC BAA-471 / A3(2) / M145).